Here is a 151-residue protein sequence, read N- to C-terminus: NADPH-dependent 7-cyano-7-deazaguanine reductase (151 aa).

Cys49 (thioimide intermediate) is an active-site residue. Asp56 acts as the Proton donor in catalysis. Residues 71-73 and 90-91 each bind substrate; these read IES and HE.

It belongs to the GTP cyclohydrolase I family. QueF type 1 subfamily.

Its subcellular location is the cytoplasm. It catalyses the reaction 7-aminomethyl-7-carbaguanine + 2 NADP(+) = 7-cyano-7-deazaguanine + 2 NADPH + 3 H(+). The protein operates within tRNA modification; tRNA-queuosine biosynthesis. Catalyzes the NADPH-dependent reduction of 7-cyano-7-deazaguanine (preQ0) to 7-aminomethyl-7-deazaguanine (preQ1). In Caulobacter vibrioides (strain ATCC 19089 / CIP 103742 / CB 15) (Caulobacter crescentus), this protein is NADPH-dependent 7-cyano-7-deazaguanine reductase.